We begin with the raw amino-acid sequence, 401 residues long: Argininosuccinate synthase (401 aa).

Residues 8-16 and Ala35 contribute to the ATP site; that span reads AYSGGLDTS. L-citrulline contacts are provided by Tyr86 and Ser91. Gly116 is a binding site for ATP. Thr118, Asn122, and Asp123 together coordinate L-aspartate. An L-citrulline-binding site is contributed by Asn122. Residues Arg126, Ser175, Ser184, Glu260, and Tyr272 each coordinate L-citrulline.

The protein belongs to the argininosuccinate synthase family. Type 1 subfamily. In terms of assembly, homotetramer.

Its subcellular location is the cytoplasm. It catalyses the reaction L-citrulline + L-aspartate + ATP = 2-(N(omega)-L-arginino)succinate + AMP + diphosphate + H(+). It functions in the pathway amino-acid biosynthesis; L-arginine biosynthesis; L-arginine from L-ornithine and carbamoyl phosphate: step 2/3. This chain is Argininosuccinate synthase, found in Carboxydothermus hydrogenoformans (strain ATCC BAA-161 / DSM 6008 / Z-2901).